Consider the following 103-residue polypeptide: Conantokin-Br (103 aa).

The signal sequence occupies residues 1 to 21 (MQLYTYLYLLVPLVTFHLILG). Residues 22 to 79 (TGTLDHGGALTERRSTDATALKPEPVLQKSAARSTDDNGKDRLTQMKRILKKRGKNAR) constitute a propeptide that is removed on maturation. The interval 34–64 (RRSTDATALKPEPVLQKSAARSTDDNGKDRL) is disordered. The segment covering 55–64 (STDDNGKDRL) has biased composition (basic and acidic residues). Residues Glu82, Glu83, Glu89, and Glu93 each carry the 4-carboxyglutamate modification. 2 residues coordinate a divalent metal cation: Glu89 and Glu93.

The protein belongs to the conotoxin B superfamily. Requires Ca(2+) as cofactor. Mg(2+) serves as cofactor. In terms of tissue distribution, expressed by the venom duct.

The protein localises to the secreted. Conantokins inhibit N-methyl-D-aspartate (NMDA) receptors. This toxin inhibits NR2 subunits N-methyl-D-aspartate (NMDA) receptor-mediated calcium influx in central nervous system neurons in the following order of preference: NR2B/GRIN2B (IC(50)=0.14 uM), NR2D/GRIN2D (IC(50)=0.31 uM), NR2A/GRIN2A (IC(50)=0.68 uM) and NR2C/GRIN2A (IC(50)=4.9 uM), when tested on rat receptors. In Conus sulcatus (Sulcate cone), this protein is Conantokin-Br.